The following is a 260-amino-acid chain: Cytochrome c oxidase subunit 3 (260 aa).

6 helical membrane-spanning segments follow: residues 30-50, 81-101, 126-146, 158-178, 196-216, and 239-259; these read LILW…VLLV, GMIL…WAFF, FLVP…VTWA, AIQS…LQAW, FFVA…FLAV, and WYWH…YWWG.

Belongs to the cytochrome c oxidase subunit 3 family. Component of the cytochrome c oxidase (complex IV, CIV), a multisubunit enzyme composed of a catalytic core of 3 subunits and several supernumerary subunits. The complex exists as a monomer or a dimer and forms supercomplexes (SCs) in the inner mitochondrial membrane with ubiquinol-cytochrome c oxidoreductase (cytochrome b-c1 complex, complex III, CIII).

It localises to the mitochondrion inner membrane. The enzyme catalyses 4 Fe(II)-[cytochrome c] + O2 + 8 H(+)(in) = 4 Fe(III)-[cytochrome c] + 2 H2O + 4 H(+)(out). Functionally, component of the cytochrome c oxidase, the last enzyme in the mitochondrial electron transport chain which drives oxidative phosphorylation. The respiratory chain contains 3 multisubunit complexes succinate dehydrogenase (complex II, CII), ubiquinol-cytochrome c oxidoreductase (cytochrome b-c1 complex, complex III, CIII) and cytochrome c oxidase (complex IV, CIV), that cooperate to transfer electrons derived from NADH and succinate to molecular oxygen, creating an electrochemical gradient over the inner membrane that drives transmembrane transport and the ATP synthase. Cytochrome c oxidase is the component of the respiratory chain that catalyzes the reduction of oxygen to water. Electrons originating from reduced cytochrome c in the intermembrane space (IMS) are transferred via the dinuclear copper A center (CU(A)) of subunit 2 and heme A of subunit 1 to the active site in subunit 1, a binuclear center (BNC) formed by heme A3 and copper B (CU(B)). The BNC reduces molecular oxygen to 2 water molecules using 4 electrons from cytochrome c in the IMS and 4 protons from the mitochondrial matrix. The sequence is that of Cytochrome c oxidase subunit 3 (COIII) from Pisaster ochraceus (Ochre sea star).